The sequence spans 376 residues: Succinyl-diaminopimelate desuccinylase (376 aa).

Histidine 68 serves as a coordination point for Zn(2+). The active site involves aspartate 70. Zn(2+) is bound at residue aspartate 101. Glutamate 135 functions as the Proton acceptor in the catalytic mechanism. The Zn(2+) site is built by glutamate 136, glutamate 164, and histidine 349.

It belongs to the peptidase M20A family. DapE subfamily. In terms of assembly, homodimer. Requires Zn(2+) as cofactor. Co(2+) serves as cofactor.

It catalyses the reaction N-succinyl-(2S,6S)-2,6-diaminopimelate + H2O = (2S,6S)-2,6-diaminopimelate + succinate. It participates in amino-acid biosynthesis; L-lysine biosynthesis via DAP pathway; LL-2,6-diaminopimelate from (S)-tetrahydrodipicolinate (succinylase route): step 3/3. Functionally, catalyzes the hydrolysis of N-succinyl-L,L-diaminopimelic acid (SDAP), forming succinate and LL-2,6-diaminopimelate (DAP), an intermediate involved in the bacterial biosynthesis of lysine and meso-diaminopimelic acid, an essential component of bacterial cell walls. In Marinobacter nauticus (strain ATCC 700491 / DSM 11845 / VT8) (Marinobacter aquaeolei), this protein is Succinyl-diaminopimelate desuccinylase.